We begin with the raw amino-acid sequence, 622 residues long: Polypeptide N-acetylgalactosaminyltransferase 18 (622 aa).

Residues 1 to 12 (MVCTRKTKTLVS) are Cytoplasmic-facing. Residues 13–35 (TCVILSGMTNIICLLYVGWVTNY) traverse the membrane as a helical; Signal-anchor for type II membrane protein segment. Residues 36-622 (IASVYVRGQE…ITNVLRSLVS (587 aa)) are Lumenal-facing. Disulfide bonds link Cys144–Cys392, Cys383–Cys462, Cys497–Cys513, Cys545–Cys558, and Cys586–Cys606. The N-linked (GlcNAc...) asparagine glycan is linked to Asn146. A catalytic subdomain A region spans residues 153 to 267 (LPEVSIVFIF…VGWAEPVLTR (115 aa)). Residue Asp194 participates in substrate binding. Asn195 is a glycosylation site (N-linked (GlcNAc...) asparagine). Residues Asp251 and His253 each coordinate Mn(2+). N-linked (GlcNAc...) asparagine glycosylation is present at Asn320. The catalytic subdomain B stretch occupies residues 324–400 (PIRSPALIGC…PCSRIAHIER (77 aa)). His397 provides a ligand contact to Mn(2+). Residues Arg400 and Tyr405 each coordinate substrate. The region spanning 484 to 614 (AYGVLQNSLK…KCSGQHWTIT (131 aa)) is the Ricin B-type lectin domain.

Belongs to the glycosyltransferase 2 family. GalNAc-T subfamily. Mn(2+) serves as cofactor.

The protein localises to the golgi apparatus membrane. The enzyme catalyses L-seryl-[protein] + UDP-N-acetyl-alpha-D-galactosamine = a 3-O-[N-acetyl-alpha-D-galactosaminyl]-L-seryl-[protein] + UDP + H(+). It carries out the reaction L-threonyl-[protein] + UDP-N-acetyl-alpha-D-galactosamine = a 3-O-[N-acetyl-alpha-D-galactosaminyl]-L-threonyl-[protein] + UDP + H(+). It functions in the pathway protein modification; protein glycosylation. Functionally, catalyzes the initial reaction in O-linked oligosaccharide biosynthesis, the transfer of an N-acetyl-D-galactosamine (GalNAc) residue from UDP-GalNAc to a serine or threonine residue on the protein receptor. This chain is Polypeptide N-acetylgalactosaminyltransferase 18 (Galnt18), found in Mus musculus (Mouse).